A 116-amino-acid chain; its full sequence is Nucleoid-associated protein PMM0020 (116 aa).

The segment covering 87-98 has biased composition (basic and acidic residues); it reads ESSTTTMKERMN. The tract at residues 87–116 is disordered; sequence ESSTTTMKERMNDLTGGLNLNLPGLDNNDS. Residues 99 to 116 are compositionally biased toward low complexity; it reads DLTGGLNLNLPGLDNNDS.

This sequence belongs to the YbaB/EbfC family. Homodimer.

The protein resides in the cytoplasm. It localises to the nucleoid. In terms of biological role, binds to DNA and alters its conformation. May be involved in regulation of gene expression, nucleoid organization and DNA protection. The sequence is that of Nucleoid-associated protein PMM0020 from Prochlorococcus marinus subsp. pastoris (strain CCMP1986 / NIES-2087 / MED4).